A 318-amino-acid polypeptide reads, in one-letter code: Porphobilinogen deaminase (318 aa).

The residue at position 248 (cysteine 248) is an S-(dipyrrolylmethanemethyl)cysteine.

It belongs to the HMBS family. As to quaternary structure, monomer. Dipyrromethane serves as cofactor.

It catalyses the reaction 4 porphobilinogen + H2O = hydroxymethylbilane + 4 NH4(+). The protein operates within porphyrin-containing compound metabolism; protoporphyrin-IX biosynthesis; coproporphyrinogen-III from 5-aminolevulinate: step 2/4. Its function is as follows. Tetrapolymerization of the monopyrrole PBG into the hydroxymethylbilane pre-uroporphyrinogen in several discrete steps. This is Porphobilinogen deaminase from Caulobacter sp. (strain K31).